Consider the following 472-residue polypeptide: Sodium-coupled neutral amino acid transporter 5 (472 aa).

Position 1 is an N-acetylmethionine (methionine 1). Over 1-48 (MELQDPKMNGALPSDAVGYRQEREGFLPSRGPAPGSKPVQFMDFEGKT) the chain is Cytoplasmic. A helical transmembrane segment spans residues 49–71 (SFGMSVFNLSNAIMGSGILGLAY). The Extracellular segment spans residues 72 to 87 (AMAHTGVIFFLALLLC). The chain crosses the membrane as a helical span at residues 88–108 (IALLSSYSIHLLLTCAGIAGI). The Cytoplasmic portion of the chain corresponds to 109-125 (RAYEQLGQRAFGPAGKV). The chain crosses the membrane as a helical span at residues 126-146 (VVATVICLHNVGAMSSYLFII). Residues 147–166 (KSELPLVIGTFLYMDPEGDW) lie on the Extracellular side of the membrane. The chain crosses the membrane as a helical span at residues 167–187 (FLKGNLLIIIVSVLIILPLAL). Residues 188–192 (MKHLG) are Cytoplasmic-facing. A helical membrane pass occupies residues 193-213 (YLGYTSGLSLTCMLFFLVSVI). The Extracellular segment spans residues 214–257 (YKKFQLGCAIGHNETAMESEALVGLPSQGLNSSCEAQMFTVDSQ). A disulfide bond links cysteine 221 and cysteine 247. A glycan (N-linked (GlcNAc...) asparagine) is linked at asparagine 226. A helical transmembrane segment spans residues 258 to 278 (MSYTVPIMAFAFVCHPEVLPI). At 279–295 (YTELCRPSKRRMQAVAN) the chain is on the cytoplasmic side. A helical membrane pass occupies residues 296–316 (VSIGAMFCMYGLTATFGYLTF). Over 317 to 334 (YSSVKAEMLHMYSQKDPL) the chain is Extracellular. A helical transmembrane segment spans residues 335-355 (ILCVRLAVLLAVTLTVPVVLF). Topologically, residues 356-376 (PIRRALQQLLFPGKAFSWPRH) are cytoplasmic. A helical transmembrane segment spans residues 377–397 (VAIALILLVLVNVLVICVPTI). Topologically, residues 398 to 399 (RD) are extracellular. A helical membrane pass occupies residues 400 to 420 (IFGVIGSTSAPSLIFILPSIF). Residues 421-439 (YLRIVPSEVEPFLSWPKIQ) lie on the Cytoplasmic side of the membrane. Residues 440–460 (ALCFGVLGVLFMAVSLGFMFA) traverse the membrane as a helical segment. Residues 461 to 472 (NWATGQSRMSGH) are Extracellular-facing.

The protein belongs to the amino acid/polyamine transporter 2 family. As to expression, predominantly expressed in stomach, brain, liver, lung and intestinal tract.

It is found in the cell membrane. It carries out the reaction L-serine(out) + Na(+)(out) + H(+)(in) = L-serine(in) + Na(+)(in) + H(+)(out). It catalyses the reaction L-alanine(out) + Na(+)(out) + H(+)(in) = L-alanine(in) + Na(+)(in) + H(+)(out). The catalysed reaction is glycine(out) + Na(+)(out) + H(+)(in) = glycine(in) + Na(+)(in) + H(+)(out). The enzyme catalyses L-glutamine(out) + Na(+)(out) + H(+)(in) = L-glutamine(in) + Na(+)(in) + H(+)(out). It carries out the reaction L-asparagine(out) + Na(+)(out) + H(+)(in) = L-asparagine(in) + Na(+)(in) + H(+)(out). It catalyses the reaction L-histidine(out) + Na(+)(out) + H(+)(in) = L-histidine(in) + Na(+)(in) + H(+)(out). The catalysed reaction is L-cysteine(out) + Na(+)(out) + H(+)(in) = L-cysteine(in) + Na(+)(in) + H(+)(out). With respect to regulation, not inhibited by lithium. Partial allosteric regulation on ions sodium binding. Symporter that cotransports neutral amino acids and sodium ions, coupled to an H(+) antiporter activity. Releases L-glutamine and glycine from astroglial cells and may participate in the glutamate/GABA-L-glutamine cycle and the NMDA receptors activation. In addition, contributes significantly to L-glutamine uptake in retina, namely in ganglion and Mueller cells therefore, participates in the retinal glutamate-glutamine cycle. The transport activity is pH sensitive and Li(+) tolerant. Moreover functions in both direction and is associated with large uncoupled fluxes of protons. The transport is electroneutral coupled to the cotransport of 1 Na(+) and the antiport of 1 H(+). May have a particular importance for modulation of net hepatic glutamine flux. The chain is Sodium-coupled neutral amino acid transporter 5 (SLC38A5) from Homo sapiens (Human).